An 80-amino-acid chain; its full sequence is Consomatin Mrc1 (80 aa).

The first 22 residues, 1–22, serve as a signal peptide directing secretion; it reads MQTAYWVMVMMMVWITAPLSEG. Residues 23-57 constitute a propeptide that is removed on maturation; it reads GKLNDVIRGLVPDDVTPQLILRSLISRRPSDSVVR. A disulfide bridge connects residues Cys-63 and Cys-68. Trp-65 is subject to D-tryptophan. Residues Pro-69, Pro-70, Pro-71, and Pro-72 each carry the 4-hydroxyproline modification. The propeptide occupies 74-80; that stretch reads RRPNGKG.

The protein belongs to the conotoxin C superfamily. Consomatin family. As to expression, expressed by the venom duct.

The protein resides in the secreted. Moderately activates human somatostatin receptors (SSTR) with a preferential activation of SSTR1 and SSTR4. In vivo, does not cause behavioral changes in mice within a few minutes of intracranial injection, but causes a progressive loss of movement thereafter. Four to five hours after injection, mice recover, even with the highest dose tested. Shows antinociception and antihyperalgesia activities in two mouse models of acute pain, most probably by acting outside the central nervous system. In Conus mercator (Trader cone), this protein is Consomatin Mrc1.